Consider the following 143-residue polypeptide: uncharacterized protein (143 aa).

The first 16 residues, 1-16, serve as a signal peptide directing secretion; that stretch reads MSRNRLFLVAGSLAVA. A helical transmembrane segment spans residues 114–134; sequence GAYVFLGPGFTPGSPSGGSGG.

It is found in the membrane. This is an uncharacterized protein from Mycobacterium tuberculosis (strain CDC 1551 / Oshkosh).